We begin with the raw amino-acid sequence, 317 residues long: Transaldolase (317 aa).

Catalysis depends on lysine 126, which acts as the Schiff-base intermediate with substrate.

It belongs to the transaldolase family. Type 1 subfamily. As to quaternary structure, homodimer.

It localises to the cytoplasm. The enzyme catalyses D-sedoheptulose 7-phosphate + D-glyceraldehyde 3-phosphate = D-erythrose 4-phosphate + beta-D-fructose 6-phosphate. The protein operates within carbohydrate degradation; pentose phosphate pathway; D-glyceraldehyde 3-phosphate and beta-D-fructose 6-phosphate from D-ribose 5-phosphate and D-xylulose 5-phosphate (non-oxidative stage): step 2/3. Functionally, transaldolase is important for the balance of metabolites in the pentose-phosphate pathway. The sequence is that of Transaldolase from Burkholderia orbicola (strain AU 1054).